The sequence spans 415 residues: Levansucrase (415 aa).

The sucrose site is built by Trp45, Asp46, Ala132, Arg202, and Asp203. Asp46 (nucleophile) is an active-site residue. Glu287 functions as the Proton donor/acceptor in the catalytic mechanism.

This sequence belongs to the glycosyl hydrolase 68 family.

The protein localises to the secreted. It catalyses the reaction [6)-beta-D-fructofuranosyl-(2-&gt;](n) alpha-D-glucopyranoside + sucrose = [6)-beta-D-fructofuranosyl-(2-&gt;](n+1) alpha-D-glucopyranoside + D-glucose. Catalyzes the synthesis of levan, a fructose polymer, by transferring the fructosyl moiety from sucrose to a growing acceptor molecule. The chain is Levansucrase from Erwinia amylovora (Fire blight bacteria).